Here is a 457-residue protein sequence, read N- to C-terminus: tRNA modification GTPase MnmE (457 aa).

The (6S)-5-formyl-5,6,7,8-tetrahydrofolate site is built by Arg25, Glu87, and Arg126. The TrmE-type G domain occupies 223-377 (GIATAIIGRP…IEEKINQLFF (155 aa)). Asn233 is a binding site for K(+). GTP contacts are provided by residues 233–238 (NVGKSS), 252–258 (TDIAGTT), and 277–280 (DTAG). Ser237 serves as a coordination point for Mg(2+). K(+) is bound by residues Thr252, Ile254, and Thr257. Thr258 is a Mg(2+) binding site. (6S)-5-formyl-5,6,7,8-tetrahydrofolate is bound at residue Lys457.

The protein belongs to the TRAFAC class TrmE-Era-EngA-EngB-Septin-like GTPase superfamily. TrmE GTPase family. Homodimer. Heterotetramer of two MnmE and two MnmG subunits. The cofactor is K(+).

The protein localises to the cytoplasm. Exhibits a very high intrinsic GTPase hydrolysis rate. Involved in the addition of a carboxymethylaminomethyl (cmnm) group at the wobble position (U34) of certain tRNAs, forming tRNA-cmnm(5)s(2)U34. The polypeptide is tRNA modification GTPase MnmE (Streptococcus suis (strain 98HAH33)).